The primary structure comprises 440 residues: Gap junction alpha-8 protein (440 aa).

An intramembrane segment occupies 2-12; it reads GDWSFLGNILE. The Cytoplasmic portion of the chain corresponds to 13-21; that stretch reads EVNEHSTVI. The helical transmembrane segment at 22 to 42 threads the bilayer; that stretch reads GRVWLTVLFIFRILILGTAAE. The Extracellular segment spans residues 43–71; the sequence is FVWGDEQSDFVCNTQQPGCENVCYDEAFP. Disulfide bonds link C54-C201, C61-C195, and C65-C190. A helical membrane pass occupies residues 72–92; that stretch reads ISHIRLWVLQIIFVSTPSLMY. The Cytoplasmic portion of the chain corresponds to 93–161; sequence VGHAVHHVRM…GTLLRTYVCH (69 aa). The tract at residues 111–143 is disordered; it reads AEELCQQSRSNGGERVPIAPDQASIRKSSSSSK. Residues 162 to 182 traverse the membrane as a helical segment; that stretch reads IIFKTLFEVGFIVGHYFLYGF. At 183–210 the chain is on the extracellular side; the sequence is RILPLYRCSRWPCPNVVDCFVSRPTEKT. Residues 211–231 form a helical membrane-spanning segment; sequence IFILFMLSVAFVSLFLNIMEM. Residues 232-440 are Cytoplasmic-facing; that stretch reads SHLGMKGIRS…SRARSDDLTI (209 aa). The tract at residues 334 to 440 is disordered; that stretch reads GAQEVEREEQ…SRARSDDLTI (107 aa). 2 stretches are compositionally biased toward basic and acidic residues: residues 353-364 and 375-399; these read VGEKKQEAEKVA and DGEKVETPGVGKDDEKEELQAEKVT. Low complexity predominate over residues 423–432; it reads LSRLSKASSR.

Belongs to the connexin family. Alpha-type (group II) subfamily. In terms of assembly, a hemichannel or connexon is composed of a hexamer of connexins. A functional gap junction is formed by the apposition of two hemichannels. Forms heteromeric channels with GJA3. In terms of tissue distribution, detected in eye lens (at protein level).

It localises to the cell membrane. Its subcellular location is the cell junction. The protein resides in the gap junction. Structural component of eye lens gap junctions. Gap junctions are dodecameric channels that connect the cytoplasm of adjoining cells. They are formed by the docking of two hexameric hemichannels, one from each cell membrane. Small molecules and ions diffuse from one cell to a neighboring cell via the central pore. The chain is Gap junction alpha-8 protein (Gja8) from Rattus norvegicus (Rat).